Here is a 292-residue protein sequence, read N- to C-terminus: Enoyl-CoA hydratase domain-containing protein 2, mitochondrial (292 aa).

The transit peptide at 1-35 directs the protein to the mitochondrion; sequence MLRVLCLLRPWRPLRARGCASDGAAGGSEIQVRAL. Lys-97 carries the N6-acetyllysine; alternate modification. Position 97 is an N6-succinyllysine; alternate (Lys-97).

This sequence belongs to the enoyl-CoA hydratase/isomerase family.

It localises to the mitochondrion. This is Enoyl-CoA hydratase domain-containing protein 2, mitochondrial (ECHDC2) from Homo sapiens (Human).